A 972-amino-acid chain; its full sequence is SWI/SNF-related matrix-associated actin-dependent regulator of chromatin subfamily A containing DEAD/H box 1A (972 aa).

3 disordered regions span residues 15 to 76 (NAVG…SDLQ), 125 to 177 (DEDS…EKQE), and 217 to 333 (SSTD…EDSI). 2 stretches are compositionally biased toward basic and acidic residues: residues 22–42 (KSPD…RKAD) and 63–72 (EVVRMGKDSA). In terms of domain architecture, CUE 1 spans 82–127 (DMEDKIIKLLEIFPQKSKKDLLEVIENTSTLDGAVAHCLMIYGDED). Residues 128–138 (SGGRKDKGGRS) are compositionally biased toward basic and acidic residues. Residues 156-169 (SESEDEDSEDEESE) show a composition bias toward acidic residues. Residues 175-218 (KQEALLKKLKRKLPDIEKEVLRDILKEHDWDYENALGSLLVFSS) form the CUE 2 domain. A compositionally biased stretch (basic and acidic residues) spans 237–246 (HSKEKTDKIT). Positions 247 to 263 (QRPSGSSSLSRWLTAAS) are enriched in polar residues. Over residues 279–290 (KSALSKSTSKNS) the composition is skewed to low complexity. The span at 307 to 332 (ASEDEDEIDSDVDSMSDDQDSEDEDS) shows a compositional bias: acidic residues. A Helicase ATP-binding domain is found at 460–628 (ILLHQHKLSG…MSLLNFIMPS (169 aa)). 473–480 (DEMGLGKT) provides a ligand contact to ATP. The DEGH box signature appears at 579–582 (DEGH). The 162-residue stretch at 805-966 (LLTKTLAKLK…AITEQMAELL (162 aa)) folds into the Helicase C-terminal domain.

Belongs to the SNF2/RAD54 helicase family.

The protein resides in the nucleus. It localises to the chromosome. It carries out the reaction ATP + H2O = ADP + phosphate + H(+). In terms of biological role, DNA helicase that possesses intrinsic ATP-dependent nucleosome-remodeling activity and is both required for DNA repair and heterochromatin organization. Promotes DNA end resection of double-strand breaks (DSBs) following DNA damage: probably acts by weakening histone DNA interactions in nucleosomes flanking DSBs. Required for the restoration of heterochromatin organization after replication. In Danio rerio (Zebrafish), this protein is SWI/SNF-related matrix-associated actin-dependent regulator of chromatin subfamily A containing DEAD/H box 1A (smarcad1a).